Reading from the N-terminus, the 561-residue chain is MAKIVEFDDKSRRSLERGINTLADAVRITMGPKGRNVLLEKKYGAPQIVNDGITVAKDIELEDPLENTGAKLIQEVASKTKDIAGDGTTTATVLAQSMIKEGLKNVAAGANPVAVRRGIEKTVSLLVKEIQTVAKPVEGEAIAQVATVSAGGDAEVGRMISEAMDKVTKDGVITVEESKSLSTDLEVVEGMQIDRGYLSPYFVTDQERLVVDFENARILITDKKISSIQDLVPVLEKVARAGQSLLIIAEDIEGEALATLVVNKARGVLNVAAVKAPGFGDRRKAMLQDIAILTGGQLISEEVGLSLEMVDLDMMGIGRKISINKDNTTIVADGGTAEEVKKRIAQIRKQLGESDSDYDKEKLQERIAKLAGGVAVIKVGAATETELKDRKLRIEDALNATKAAVEEGIVPGGGTTLIHLSTKVEELKGSLNNEEEKIGADIVRRALEAPLNQIANNSGVEGSVIVEKVRSTDFSVGYNVITGEYEDLIAAGILDPAMVVRSALQNAGSIAGMVLTTEAVVVEKPEKKGAAPDMDGGMGGMGGMGGMGGMGGMGMPGMGMM.

ATP-binding positions include 29–32 (TMGP), 86–90 (DGTTT), G413, and D495.

Belongs to the chaperonin (HSP60) family. Forms a cylinder of 14 subunits composed of two heptameric rings stacked back-to-back. Interacts with the co-chaperonin GroES.

It localises to the cytoplasm. The catalysed reaction is ATP + H2O + a folded polypeptide = ADP + phosphate + an unfolded polypeptide.. Functionally, together with its co-chaperonin GroES, plays an essential role in assisting protein folding. The GroEL-GroES system forms a nano-cage that allows encapsulation of the non-native substrate proteins and provides a physical environment optimized to promote and accelerate protein folding. The chain is Chaperonin GroEL 1 from Trichodesmium erythraeum (strain IMS101).